We begin with the raw amino-acid sequence, 256 residues long: Short chain dehydrogenase adrF (256 aa).

NADP(+) contacts are provided by I11, D57, R119, Y151, K155, and V184. The active-site Proton acceptor is the Y151. Residue K155 is the Lowers pKa of active site Tyr of the active site.

It belongs to the short-chain dehydrogenases/reductases (SDR) family.

Its pathway is secondary metabolite biosynthesis; terpenoid biosynthesis. Its function is as follows. Short chain dehydrogenase; part of the gene cluster that mediates the biosynthesis of andrastins, meroterpenoid compounds that exhibit inhibitory activity against ras farnesyltransferase, suggesting that they could be promising leads for antitumor agents. The first step of the pathway is the synthesis of 3,5-dimethylorsellinic acid (DMOA) by the polyketide synthase adrD via condensation of one acetyl-CoA starter unit with 3 malonyl-CoA units and 2 methylations. DMAO is then converted to farnesyl-DMAO by the prenyltransferase adrG. The methyltransferase adrK catalyzes the methylation of the carboxyl group of farnesyl-DMAO to farnesyl-DMAO methyl ester which is further converted to epoxyfarnesyl-DMAO methyl ester by the FAD-dependent monooxygenase adrH. The terpene cyclase adrI then catalyzes the carbon skeletal rearrangement to generate the andrastin E, the first compound in the pathway having the andrastin scaffold, with the tetracyclic ring system. The post-cyclization tailoring enzymes adrF, adrE, adrJ, and adrA, are involved in the conversion of andrastin E into andrastin A. The short chain dehydrogenase adrF is responsible for the oxidation of the C-3 a hydroxyl group of andrastin E to yield the corresponding ketone, andrastin D. The ketoreductase adrE stereoselectively reduces the carbonyl moiety to reverse the stereochemistry of the C-3 position to yield andrastin F. The acetyltransferase adrJ is the acetyltransferase that attaches the acetyl group to the C-3 hydroxyl group of andrastin F to yield andrastin C. Finally, the cytochrome P450 monooxygenase adrA catalyzes two sequential oxidation reactions of the C-23 methyl group, to generate the corresponding alcohol andrastin B, and aldehyde andrastin A. The sequence is that of Short chain dehydrogenase adrF from Penicillium roqueforti.